We begin with the raw amino-acid sequence, 123 residues long: D-ribose pyranase (123 aa).

His20 functions as the Proton donor in the catalytic mechanism. Residues Asp28, His90, and 112 to 114 each bind substrate; that span reads YAN.

It belongs to the RbsD / FucU family. RbsD subfamily. As to quaternary structure, homodecamer.

It is found in the cytoplasm. The enzyme catalyses beta-D-ribopyranose = beta-D-ribofuranose. Its pathway is carbohydrate metabolism; D-ribose degradation; D-ribose 5-phosphate from beta-D-ribopyranose: step 1/2. In terms of biological role, catalyzes the interconversion of beta-pyran and beta-furan forms of D-ribose. The polypeptide is D-ribose pyranase (Corynebacterium glutamicum (strain R)).